The following is a 209-amino-acid chain: Ancillary SecYEG translocon subunit (209 aa).

The Cytoplasmic portion of the chain corresponds to 1–23; that stretch reads MAAHLEEQQELDNFKYFWKTTGK. The helical transmembrane segment at 24 to 42 threads the bilayer; sequence WLFALLILAALGYLGYTVY. The Periplasmic portion of the chain corresponds to 43 to 209; it reads QNRAASQNQE…LLQMKLDSLK (167 aa). A TPR repeat occupies 161 to 194; that stretch reads PLLMETKGDVYAAQEKSQEALKNYGQALEKMPQD.

The protein belongs to the YfgM family. As to quaternary structure, interacts with the SecYEG translocon. Forms a complex with PpiD.

It localises to the cell inner membrane. Functionally, may mediate protein transfer from the SecYEG translocon to the periplasmic chaperone network via its periplasmic C-terminal region. The protein is Ancillary SecYEG translocon subunit of Neisseria gonorrhoeae (strain ATCC 700825 / FA 1090).